We begin with the raw amino-acid sequence, 201 residues long: Small ribosomal subunit protein uS4 (201 aa).

The S4 RNA-binding domain maps to 91–157 (SRLDNVVYRA…VPFQIARETA (67 aa)).

The protein belongs to the universal ribosomal protein uS4 family. In terms of assembly, part of the 30S ribosomal subunit. Contacts protein S5. The interaction surface between S4 and S5 is involved in control of translational fidelity.

One of the primary rRNA binding proteins, it binds directly to 16S rRNA where it nucleates assembly of the body of the 30S subunit. Its function is as follows. With S5 and S12 plays an important role in translational accuracy. The protein is Small ribosomal subunit protein uS4 of Mycolicibacterium paratuberculosis (strain ATCC BAA-968 / K-10) (Mycobacterium paratuberculosis).